A 364-amino-acid chain; its full sequence is Chorismate synthase (364 aa).

Positions 41 to 60 are disordered; the sequence is MQHDLDRRRPGTSRYTTARR. NADP(+) is bound by residues Arg48 and Arg54. FMN contacts are provided by residues 125-127, 238-239, Gly278, 293-297, and Arg319; these read RSS, NA, and KPTSS.

Belongs to the chorismate synthase family. In terms of assembly, homotetramer. The cofactor is FMNH2.

It carries out the reaction 5-O-(1-carboxyvinyl)-3-phosphoshikimate = chorismate + phosphate. It functions in the pathway metabolic intermediate biosynthesis; chorismate biosynthesis; chorismate from D-erythrose 4-phosphate and phosphoenolpyruvate: step 7/7. Catalyzes the anti-1,4-elimination of the C-3 phosphate and the C-6 proR hydrogen from 5-enolpyruvylshikimate-3-phosphate (EPSP) to yield chorismate, which is the branch point compound that serves as the starting substrate for the three terminal pathways of aromatic amino acid biosynthesis. This reaction introduces a second double bond into the aromatic ring system. This Shewanella sp. (strain MR-4) protein is Chorismate synthase.